A 181-amino-acid polypeptide reads, in one-letter code: Protein Syd (181 aa).

It belongs to the Syd family.

The protein localises to the cell inner membrane. In terms of biological role, interacts with the SecY protein in vivo. May bind preferentially to an uncomplexed state of SecY, thus functioning either as a chelating agent for excess SecY in the cell or as a regulatory factor that negatively controls the translocase function. The chain is Protein Syd from Salmonella agona (strain SL483).